The primary structure comprises 933 residues: Isoleucine--tRNA ligase (933 aa).

The 'HIGH' region signature appears at P57–H67. Position 554 (E554) interacts with L-isoleucyl-5'-AMP. The short motif at K595–S599 is the 'KMSKS' region element. Position 598 (K598) interacts with ATP.

Belongs to the class-I aminoacyl-tRNA synthetase family. IleS type 1 subfamily. As to quaternary structure, monomer.

The protein localises to the cytoplasm. It catalyses the reaction tRNA(Ile) + L-isoleucine + ATP = L-isoleucyl-tRNA(Ile) + AMP + diphosphate. In terms of biological role, catalyzes the attachment of isoleucine to tRNA(Ile). As IleRS can inadvertently accommodate and process structurally similar amino acids such as valine, to avoid such errors it has two additional distinct tRNA(Ile)-dependent editing activities. One activity is designated as 'pretransfer' editing and involves the hydrolysis of activated Val-AMP. The other activity is designated 'posttransfer' editing and involves deacylation of mischarged Val-tRNA(Ile). This Streptococcus pyogenes serotype M1 protein is Isoleucine--tRNA ligase.